A 406-amino-acid chain; its full sequence is Arginine biosynthesis bifunctional protein ArgJ (406 aa).

Residues T156, K182, T193, E279, N401, and T406 each contribute to the substrate site. T193 serves as the catalytic Nucleophile.

Belongs to the ArgJ family. Heterotetramer of two alpha and two beta chains.

The protein resides in the cytoplasm. It carries out the reaction N(2)-acetyl-L-ornithine + L-glutamate = N-acetyl-L-glutamate + L-ornithine. It catalyses the reaction L-glutamate + acetyl-CoA = N-acetyl-L-glutamate + CoA + H(+). Its pathway is amino-acid biosynthesis; L-arginine biosynthesis; L-ornithine and N-acetyl-L-glutamate from L-glutamate and N(2)-acetyl-L-ornithine (cyclic): step 1/1. It functions in the pathway amino-acid biosynthesis; L-arginine biosynthesis; N(2)-acetyl-L-ornithine from L-glutamate: step 1/4. Its activity is regulated as follows. Feedback inhibition by L-arginine. Catalyzes two activities which are involved in the cyclic version of arginine biosynthesis: the synthesis of N-acetylglutamate from glutamate and acetyl-CoA as the acetyl donor, and of ornithine by transacetylation between N(2)-acetylornithine and glutamate. The sequence is that of Arginine biosynthesis bifunctional protein ArgJ from Bacillus amyloliquefaciens (Bacillus velezensis).